Here is a 320-residue protein sequence, read N- to C-terminus: Acyl-coenzyme A thioesterase 8 (320 aa).

Active-site charge relay system residues include D233, S255, and Q305. The short motif at 318–320 (SKL) is the Microbody targeting signal element.

Belongs to the C/M/P thioester hydrolase family. As to quaternary structure, homodimer. As to expression, ubiquitous.

Its subcellular location is the peroxisome matrix. It catalyses the reaction choloyl-CoA + H2O = cholate + CoA + H(+). The catalysed reaction is chenodeoxycholoyl-CoA + H2O = chenodeoxycholate + CoA + H(+). It carries out the reaction acetyl-CoA + H2O = acetate + CoA + H(+). The enzyme catalyses malonyl-CoA + H2O = malonate + CoA + H(+). It catalyses the reaction acetoacetyl-CoA + H2O = acetoacetate + CoA + H(+). The catalysed reaction is propanoyl-CoA + H2O = propanoate + CoA + H(+). It carries out the reaction butanoyl-CoA + H2O = butanoate + CoA + H(+). The enzyme catalyses succinyl-CoA + H2O = succinate + CoA + H(+). It catalyses the reaction glutaryl-CoA + H2O = glutarate + CoA + H(+). The catalysed reaction is hexanoyl-CoA + H2O = hexanoate + CoA + H(+). It carries out the reaction hexanedioyl-CoA + H2O = hexanedioate + CoA + H(+). The enzyme catalyses octanoyl-CoA + H2O = octanoate + CoA + H(+). It catalyses the reaction octanedioyl-CoA + H2O = octanedioate + CoA + H(+). The catalysed reaction is decanoyl-CoA + H2O = decanoate + CoA + H(+). It carries out the reaction decanedioyl-CoA + H2O = decanedioate + CoA + H(+). The enzyme catalyses dodecanoyl-CoA + H2O = dodecanoate + CoA + H(+). It catalyses the reaction dodecanedioyl-CoA + H2O = dodecanedioate + CoA + H(+). The catalysed reaction is tetradecanoyl-CoA + H2O = tetradecanoate + CoA + H(+). It carries out the reaction (9Z)-tetradecenoyl-CoA + H2O = (9Z)-tetradecenoate + CoA + H(+). The enzyme catalyses hexadecanoyl-CoA + H2O = hexadecanoate + CoA + H(+). It catalyses the reaction (9Z)-hexadecenoyl-CoA + H2O = (9Z)-hexadecenoate + CoA + H(+). The catalysed reaction is octadecanoyl-CoA + H2O = octadecanoate + CoA + H(+). It carries out the reaction (9Z)-octadecenoyl-CoA + H2O = (9Z)-octadecenoate + CoA + H(+). The enzyme catalyses (9Z,12Z)-octadecadienoyl-CoA + H2O = (9Z,12Z)-octadecadienoate + CoA + H(+). It catalyses the reaction eicosanoyl-CoA + H2O = eicosanoate + CoA + H(+). The catalysed reaction is (5Z,8Z,11Z,14Z)-eicosatetraenoyl-CoA + H2O = (5Z,8Z,11Z,14Z)-eicosatetraenoate + CoA + H(+). It carries out the reaction 4,8-dimethylnonanoyl-CoA + H2O = 4,8-dimethylnonanoate + CoA + H(+). The enzyme catalyses 2,6-dimethylheptanoyl-CoA + H2O = 2,6-dimethylheptanoate + CoA + H(+). It catalyses the reaction (3S)-3-hydroxy-3-methylglutaryl-CoA + H2O = 3-hydroxy-3-methylglutarate + CoA + H(+). The catalysed reaction is 3alpha,7alpha,12alpha-trihydroxy-5beta-cholestan-26-oyl-CoA + H2O = 3alpha,7alpha,12alpha-trihydroxy-5beta-cholestan-26-oate + CoA + H(+). It carries out the reaction 2-methyloctadecanoyl-CoA + H2O = 2-methyloctadecanoate + CoA + H(+). The enzyme catalyses prostaglandin F2alpha-CoA + H2O = prostaglandin F2alpha + CoA + H(+). It functions in the pathway lipid metabolism; fatty acid metabolism. Its activity is regulated as follows. Inhibited by CoASH (IC(50)=10-15 uM). Also inhibited by cysteine-reactive agents. Its function is as follows. Catalyzes the hydrolysis of acyl-CoAs into free fatty acids and coenzyme A (CoASH), regulating their respective intracellular levels. Displays no strong substrate specificity with respect to the carboxylic acid moiety of Acyl-CoAs. Hydrolyzes medium length (C2 to C20) straight-chain, saturated and unsaturated acyl-CoAS but is inactive towards substrates with longer aliphatic chains. Moreover, it catalyzes the hydrolysis of CoA esters of bile acids, such as choloyl-CoA and chenodeoxycholoyl-CoA and competes with bile acid CoA:amino acid N-acyltransferase (BAAT). Is also able to hydrolyze CoA esters of dicarboxylic acids. It is involved in the metabolic regulation of peroxisome proliferation. This is Acyl-coenzyme A thioesterase 8 (Acot8) from Mus musculus (Mouse).